Consider the following 1131-residue polypeptide: ATP-dependent helicase FUN30 (1131 aa).

Residues 1 to 70 (MSGSHSNDED…HTSKPLPSGS (70 aa)) form a disordered region. Residues 16–36 (PETSSPTKVASSSPLKPTSPT) show a composition bias toward polar residues. The CUE-like region stretch occupies residues 76-111 (VNLAREFPDFSQTLVQAVFKSNSFNLQSARERLTRL). The disordered stretch occupies residues 114 to 141 (QRQNWTWNKNASPKKSETPPPVKKSLPL). S232 is modified (phosphoserine). 2 disordered regions span residues 242 to 273 (KYGRHANDNDEEEEESMMTDDDDASGDDYTES) and 327 to 350 (NDKDTEENASNKRKRRAAASANES). A compositionally biased stretch (acidic residues) spans 250–271 (NDEEEEESMMTDDDDASGDDYT). S369 is modified (phosphoserine). The tract at residues 400–533 (DLMNLGEDDD…GDDDDDDDDE (134 aa)) is disordered. Residues 405–416 (GEDDDDDNDDGN) show a composition bias toward acidic residues. Residues 417–432 (NDNNNSNNNNTAGADA) show a composition bias toward low complexity. Residues 433 to 442 (TSKEKEDTKA) are compositionally biased toward basic and acidic residues. The residue at position 451 (S451) is a Phosphoserine. A compositionally biased stretch (acidic residues) spans 480-533 (EDEDDDVDLEAIDDELPQSEHEDDDYEEEDEDYNDEEEDVEYDDGDDDDDDDDE). A Helicase ATP-binding domain is found at 584–752 (NLLYQNKMSC…MSLLEFIMPN (169 aa)). 597–604 (DDMGLGKT) is an ATP binding site. A DEGH box motif is present at residues 703-706 (DEGH). In terms of domain architecture, Helicase C-terminal spans 953 to 1108 (ALKKLLKTII…EDKKSQDVLE (156 aa)).

It belongs to the SNF2/RAD54 helicase family. As to quaternary structure, homodimer.

The protein resides in the nucleus. The protein localises to the chromosome. The catalysed reaction is ATP + H2O = ADP + phosphate + H(+). In terms of biological role, DNA helicase that possesses intrinsic ATP-dependent nucleosome-remodeling activity and is both required for DNA repair and heterochromatin organization. Promotes DNA end resection of double-strand breaks (DSBs) following DNA damage: probably acts by weakening histone DNA interactions in nucleosomes flanking DSBs, facilitating single-stranded DNA (ssDNA) production by the EXO1 and SGS1 machinery. Promotes gene silencing at heterochromatin by regulating the chromatin structure within or around silent loci. Also required for heterochromatin organization at centromeres. The protein is ATP-dependent helicase FUN30 (FUN30) of Saccharomyces cerevisiae (strain ATCC 204508 / S288c) (Baker's yeast).